A 526-amino-acid chain; its full sequence is Glutamyl-tRNA(Gln) amidotransferase subunit A, mitochondrial (526 aa).

Residues Lys-76 and Ser-171 each act as charge relay system in the active site. The Acyl-ester intermediate role is filled by Ser-195.

This sequence belongs to the amidase family. GatA subfamily. In terms of assembly, subunit of the heterotrimeric GatCAB amidotransferase (AdT) complex, composed of A (QRSL1), B (GATB) and C (GATC) subunits.

It localises to the mitochondrion. The enzyme catalyses L-glutamyl-tRNA(Gln) + L-glutamine + ATP + H2O = L-glutaminyl-tRNA(Gln) + L-glutamate + ADP + phosphate + H(+). Functionally, allows the formation of correctly charged Gln-tRNA(Gln) through the transamidation of misacylated Glu-tRNA(Gln) in the mitochondria. The reaction takes place in the presence of glutamine and ATP through an activated gamma-phospho-Glu-tRNA(Gln). This chain is Glutamyl-tRNA(Gln) amidotransferase subunit A, mitochondrial, found in Canis lupus familiaris (Dog).